The chain runs to 874 residues: Mannuronan C5-epimerase AlgE6 (874 aa).

PbH1 repeat units lie at residues 133 to 155 (DRNV…DPHE), 157 to 179 (TINL…VADY), 180 to 202 (QIGG…NIVT), 204 to 226 (TNDF…VVQR), 234 to 256 (PENI…LVKM), 257 to 279 (SNNV…RVYG), 280 to 302 (AQGV…APEV), and 320 to 351 (TLNT…DFSS). 7 Hemolysin-type calcium-binding repeats span residues 383-394 (GTDGNDVLIGSD), 401-417 (GGAG…DDLL), 419-435 (GGAG…ADTF), 562-578 (GGGG…GDLL), 580-596 (GGAG…ADTF), 723-739 (GGGG…NDLL), and 741-757 (GGAG…ADTF). The disordered stretch occupies residues 401 to 420 (GGAGDDRLDGGAGDDLLDGG).

It belongs to the D-mannuronate C5-epimerase family. It depends on Ca(2+) as a cofactor.

The protein resides in the secreted. The enzyme catalyses [(1-&gt;4)-beta-D-mannuronosyl](n) = [alginate](n). It functions in the pathway glycan biosynthesis; alginate biosynthesis. With respect to regulation, inhibited by zinc. Functionally, converts beta-D-mannuronic acid (M) to alpha-L-guluronic acid (G), producing a polymer with gel-forming capacity, required for the formation of the cyst coat. This is Mannuronan C5-epimerase AlgE6 from Azotobacter vinelandii.